We begin with the raw amino-acid sequence, 441 residues long: Ribosomal protein uS12 methylthiotransferase RimO (441 aa).

The MTTase N-terminal domain maps to 8-118; that stretch reads PKIGFVSLGC…VLEHVHHYTP (111 aa). [4Fe-4S] cluster is bound by residues Cys17, Cys53, Cys82, Cys150, Cys154, and Cys157. The Radical SAM core domain occupies 136–373; the sequence is LTPRHYAYLK…MQLQQQISAE (238 aa). The 66-residue stretch at 376-441 folds into the TRAM domain; sequence QEKVGREILV…DEYDLWGTRV (66 aa).

It belongs to the methylthiotransferase family. RimO subfamily. [4Fe-4S] cluster is required as a cofactor.

The protein localises to the cytoplasm. The catalysed reaction is L-aspartate(89)-[ribosomal protein uS12]-hydrogen + (sulfur carrier)-SH + AH2 + 2 S-adenosyl-L-methionine = 3-methylsulfanyl-L-aspartate(89)-[ribosomal protein uS12]-hydrogen + (sulfur carrier)-H + 5'-deoxyadenosine + L-methionine + A + S-adenosyl-L-homocysteine + 2 H(+). In terms of biological role, catalyzes the methylthiolation of an aspartic acid residue of ribosomal protein uS12. The polypeptide is Ribosomal protein uS12 methylthiotransferase RimO (Klebsiella pneumoniae subsp. pneumoniae (strain ATCC 700721 / MGH 78578)).